Here is a 132-residue protein sequence, read N- to C-terminus: Small ribosomal subunit protein uS8 (132 aa).

Belongs to the universal ribosomal protein uS8 family. Part of the 30S ribosomal subunit. Contacts proteins S5 and S12.

Its function is as follows. One of the primary rRNA binding proteins, it binds directly to 16S rRNA central domain where it helps coordinate assembly of the platform of the 30S subunit. This chain is Small ribosomal subunit protein uS8, found in Tropheryma whipplei (strain Twist) (Whipple's bacillus).